We begin with the raw amino-acid sequence, 162 residues long: Phosphopantetheine adenylyltransferase (162 aa).

A substrate-binding site is contributed by Ser-11. ATP-binding positions include 11–12 (SF) and His-19. Residues Lys-43, Val-76, and Arg-90 each coordinate substrate. Residues 91–93 (GLR), Glu-101, and 126–132 (HLYISSS) each bind ATP.

It belongs to the bacterial CoaD family. In terms of assembly, homohexamer. Mg(2+) is required as a cofactor.

It is found in the cytoplasm. It carries out the reaction (R)-4'-phosphopantetheine + ATP + H(+) = 3'-dephospho-CoA + diphosphate. The protein operates within cofactor biosynthesis; coenzyme A biosynthesis; CoA from (R)-pantothenate: step 4/5. Its activity is regulated as follows. Is inhibited by a series of cycloalkyl pyrimidines, which also show suppression of bacterial growth. In terms of biological role, reversibly transfers an adenylyl group from ATP to 4'-phosphopantetheine, yielding dephospho-CoA (dPCoA) and pyrophosphate. The sequence is that of Phosphopantetheine adenylyltransferase from Streptococcus pneumoniae (strain ATCC BAA-255 / R6).